Consider the following 167-residue polypeptide: 2-C-methyl-D-erythritol 2,4-cyclodiphosphate synthase (167 aa).

2 residues coordinate a divalent metal cation: Asp15 and His17. 4-CDP-2-C-methyl-D-erythritol 2-phosphate contacts are provided by residues 15–17 (DIH) and 43–44 (HS). His51 contributes to the a divalent metal cation binding site. 4-CDP-2-C-methyl-D-erythritol 2-phosphate contacts are provided by residues 65–67 (DIG), 141–144 (TTNE), and Arg151.

It belongs to the IspF family. In terms of assembly, homotrimer. Requires a divalent metal cation as cofactor.

It carries out the reaction 4-CDP-2-C-methyl-D-erythritol 2-phosphate = 2-C-methyl-D-erythritol 2,4-cyclic diphosphate + CMP. It participates in isoprenoid biosynthesis; isopentenyl diphosphate biosynthesis via DXP pathway; isopentenyl diphosphate from 1-deoxy-D-xylulose 5-phosphate: step 4/6. Involved in the biosynthesis of isopentenyl diphosphate (IPP) and dimethylallyl diphosphate (DMAPP), two major building blocks of isoprenoid compounds. Catalyzes the conversion of 4-diphosphocytidyl-2-C-methyl-D-erythritol 2-phosphate (CDP-ME2P) to 2-C-methyl-D-erythritol 2,4-cyclodiphosphate (ME-CPP) with a corresponding release of cytidine 5-monophosphate (CMP). This is 2-C-methyl-D-erythritol 2,4-cyclodiphosphate synthase from Prochlorococcus marinus (strain MIT 9312).